The following is a 317-amino-acid chain: 4-diphosphocytidyl-2-C-methyl-D-erythritol kinase (317 aa).

K11 is an active-site residue. Residue 99-109 (PVAAGLAGGST) participates in ATP binding. Residue D141 is part of the active site.

The protein belongs to the GHMP kinase family. IspE subfamily.

The catalysed reaction is 4-CDP-2-C-methyl-D-erythritol + ATP = 4-CDP-2-C-methyl-D-erythritol 2-phosphate + ADP + H(+). It functions in the pathway isoprenoid biosynthesis; isopentenyl diphosphate biosynthesis via DXP pathway; isopentenyl diphosphate from 1-deoxy-D-xylulose 5-phosphate: step 3/6. Functionally, catalyzes the phosphorylation of the position 2 hydroxy group of 4-diphosphocytidyl-2C-methyl-D-erythritol. This is 4-diphosphocytidyl-2-C-methyl-D-erythritol kinase from Nostoc punctiforme (strain ATCC 29133 / PCC 73102).